A 392-amino-acid chain; its full sequence is Elongation factor Tu 2 (392 aa).

Residues 10-201 form the tr-type G domain; the sequence is KPHVNIGTIG…AVDSYIPTPE (192 aa). Residues 19-26 form a G1 region; the sequence is GHVDHGKT. 19 to 26 lines the GTP pocket; the sequence is GHVDHGKT. Thr26 provides a ligand contact to Mg(2+). A G2 region spans residues 55–59; that stretch reads GITIS. Residues 76-79 are G3; that stretch reads DCPG. Residues 76 to 80 and 131 to 134 each bind GTP; these read DCPGH and NKVD. The tract at residues 131 to 134 is G4; it reads NKVD. The segment at 169 to 171 is G5; that stretch reads SAL.

The protein belongs to the TRAFAC class translation factor GTPase superfamily. Classic translation factor GTPase family. EF-Tu/EF-1A subfamily. As to quaternary structure, monomer.

Its subcellular location is the cytoplasm. It catalyses the reaction GTP + H2O = GDP + phosphate + H(+). In terms of biological role, GTP hydrolase that promotes the GTP-dependent binding of aminoacyl-tRNA to the A-site of ribosomes during protein biosynthesis. This chain is Elongation factor Tu 2, found in Rhizobium etli (strain ATCC 51251 / DSM 11541 / JCM 21823 / NBRC 15573 / CFN 42).